Reading from the N-terminus, the 914-residue chain is TRPM8 channel-associated factor 3 (914 aa).

One can recognise a Peptidase M60 domain in the interval 533–832 (NSWVSTGLYL…TYLQLQEGFG (300 aa)).

It belongs to the TCAF family. Prostate-specific. Present in both dorso-lateral and anterior prostate.

Functionally, may play a role in the regulation of the cation channel TRPM8 activity. The chain is TRPM8 channel-associated factor 3 from Mus musculus (Mouse).